Reading from the N-terminus, the 310-residue chain is Small ribosomal subunit protein uS2 (310 aa).

Basic and acidic residues predominate over residues 249-272 (WERDLLEGEKAEKKDDAEAAEKPA). Positions 249-310 (WERDLLEGEK…EAPAADAEQA (62 aa)) are disordered. A compositionally biased stretch (low complexity) spans 273–310 (EAPAAEAPAAEAAEAPAAEAAPAEEPAAEAPAADAEQA).

It belongs to the universal ribosomal protein uS2 family.

This chain is Small ribosomal subunit protein uS2 (rpsB), found in Streptomyces coelicolor (strain ATCC BAA-471 / A3(2) / M145).